The chain runs to 31 residues: Photosystem II reaction center protein T (31 aa).

Residues 3–23 traverse the membrane as a helical segment; sequence SFAYILILAFSIGTLFFAIAL.

It belongs to the PsbT family. As to quaternary structure, PSII is composed of 1 copy each of membrane proteins PsbA, PsbB, PsbC, PsbD, PsbE, PsbF, PsbH, PsbI, PsbJ, PsbK, PsbL, PsbM, PsbT, PsbX, PsbY, PsbZ, Psb30/Ycf12, peripheral proteins PsbO, CyanoQ (PsbQ), PsbU, PsbV and a large number of cofactors. It forms dimeric complexes.

The protein localises to the cellular thylakoid membrane. Its function is as follows. Found at the monomer-monomer interface of the photosystem II (PS II) dimer, plays a role in assembly and dimerization of PSII. PSII is a light-driven water plastoquinone oxidoreductase, using light energy to abstract electrons from H(2)O, generating a proton gradient subsequently used for ATP formation. This chain is Photosystem II reaction center protein T, found in Synechococcus sp. (strain RCC307).